A 713-amino-acid polypeptide reads, in one-letter code: MNPTETKAIPVSKQLEGPHSPNKKRHKKQAVKTEPEKKSQSTKPSVVHEKKTQEVKPKEHPEPKSLPTHSADAGSKRAHKEKAVSRSNEQPTSEKSTKPKAKPQDPTPSDGKLSVTGVSAASGKPAETKKDDKSLTSSVPAESKSSKPSGKSDMDAALDDLIDTLGGPEETEEDNTTYTGPEVLDPMSSTYIEELGKREVTLPPKYRELLDKKEGIPVPPPDTSKPLGPDDAIDALSLDLTCSSPTADGKKTEKEKSTGEVLKAQSVGVIKSAAAPPHEKKRRVEEDTMSDQALEALSASLGSRKSEPELDLSSIKEIDEAKAKEEKLKKCGEDDETVPPEYRLKPAMDKDGKPLLPEAEEKPKPLSESELIDELSEDFDQSKRKEKQSKPTEKTKESQATAPTPVGEAVSRTSLCCVQSAPPKPATGMVPDDAVEALAGSLGKKEADPEDGKPVEDKVKEKAKEEDREKLGEKEETIPPDYRLEEVKDKDGKTLPHKDPKEPVLPLSEDFVLDALSQDFAGPPAASSLFEDAKLSAAVSEVVSQTSAPTTHSAGPPPDTVSDDKKLDDALDQLSDSLGQRQPDPDENKPIEDKVKEKAEAEHRDKLGERDDTIPPEYRHLLDKDEEGKSTKPPTKKPEAPKKPEAAQDPIDALSGDFDRCPSTTETSENTTKDKDKKTASKSKAPKNGGKAKDSTKAKEETSKQKSDGKSTS.

Disordered regions lie at residues 1 to 187 and 211 to 506; these read MNPT…LDPM and DKKE…PVLP. Basic residues predominate over residues 21–30; it reads PNKKRHKKQA. A Glycyl lysine isopeptide (Lys-Gly) (interchain with G-Cter in SUMO2) cross-link involves residue lysine 32. The span at 46–63 shows a compositional bias: basic and acidic residues; the sequence is VVHEKKTQEVKPKEHPEP. Lysine 50 bears the N6-acetyllysine mark. Residues 85–94 are compositionally biased toward polar residues; it reads SRSNEQPTSE. Serine 87 and serine 134 each carry phosphoserine. Position 136 is a phosphothreonine (threonine 136). The stretch at 171–223 is one Inhibitory domain 1 repeat; the sequence is TEEDNTTYTGPEVLDPMSSTYIEELGKREVTLPPKYRELLDKKEGIPVPPPDT. A Phosphoserine modification is found at serine 244. Composition is skewed to basic and acidic residues over residues 248–258, 304–332, and 342–367; these read DGKKTEKEKST, RKSE…KKCG, and YRLK…KPLS. The stretch at 307 to 359 is one Inhibitory domain 2 repeat; that stretch reads EPELDLSSIKEIDEAKAKEEKLKKCGEDDETVPPEYRLKPAMDKDGKPLLPEA. A phosphoserine mark is found at serine 367, serine 369, and serine 376. The span at 370-379 shows a compositional bias: acidic residues; that stretch reads ELIDELSEDF. A compositionally biased stretch (basic and acidic residues) spans 380 to 397; that stretch reads DQSKRKEKQSKPTEKTKE. Serine 441 is modified (phosphoserine). Residues 443 to 502 show a composition bias toward basic and acidic residues; sequence GKKEADPEDGKPVEDKVKEKAKEEDREKLGEKEETIPPDYRLEEVKDKDGKTLPHKDPKE. The Inhibitory domain 3 repeat unit spans residues 447–500; it reads ADPEDGKPVEDKVKEKAKEEDREKLGEKEETIPPDYRLEEVKDKDGKTLPHKDP. 2 positions are modified to phosphoserine: serine 517 and serine 528. The tract at residues 536–713 is disordered; sequence SAAVSEVVSQ…KQKSDGKSTS (178 aa). Polar residues predominate over residues 542–553; it reads VVSQTSAPTTHS. Phosphoserine occurs at positions 575 and 577. The Inhibitory domain 4 repeat unit spans residues 583 to 636; sequence PDPDENKPIEDKVKEKAEAEHRDKLGERDDTIPPEYRHLLDKDEEGKSTKPPTK. 2 stretches are compositionally biased toward basic and acidic residues: residues 583 to 646 and 691 to 713; these read PDPD…KPEA and KAKD…KSTS.

It belongs to the protease inhibitor I27 (calpastatin) family.

Specific inhibition of calpain (calcium-dependent cysteine protease). Plays a key role in postmortem tenderization of meat and have been proposed to be involved in muscle protein degradation in living tissue. The sequence is that of Calpastatin (CAST) from Sus scrofa (Pig).